The primary structure comprises 169 residues: Large ribosomal subunit protein uL10 (169 aa).

It belongs to the universal ribosomal protein uL10 family. Part of the ribosomal stalk of the 50S ribosomal subunit. The N-terminus interacts with L11 and the large rRNA to form the base of the stalk. The C-terminus forms an elongated spine to which L12 dimers bind in a sequential fashion forming a multimeric L10(L12)X complex.

Forms part of the ribosomal stalk, playing a central role in the interaction of the ribosome with GTP-bound translation factors. In Onion yellows phytoplasma (strain OY-M), this protein is Large ribosomal subunit protein uL10.